We begin with the raw amino-acid sequence, 377 residues long: tRNA(Met) cytidine acetate ligase (377 aa).

Residues 7–20 (VVEYNPFHNGHRYH), Gly-101, Asn-151, and Arg-176 contribute to the ATP site.

The protein belongs to the TmcAL family.

It is found in the cytoplasm. It carries out the reaction cytidine(34) in elongator tRNA(Met) + acetate + ATP = N(4)-acetylcytidine(34) in elongator tRNA(Met) + AMP + diphosphate. In terms of biological role, catalyzes the formation of N(4)-acetylcytidine (ac(4)C) at the wobble position of elongator tRNA(Met), using acetate and ATP as substrates. First activates an acetate ion to form acetyladenylate (Ac-AMP) and then transfers the acetyl group to tRNA to form ac(4)C34. The polypeptide is tRNA(Met) cytidine acetate ligase (Limosilactobacillus reuteri (strain DSM 20016) (Lactobacillus reuteri)).